Consider the following 360-residue polypeptide: Ubiquitin carboxyl-terminal hydrolase MIY1 (360 aa).

Catalysis depends on Cys28, which acts as the Nucleophile. Residue His216 is the Proton acceptor of the active site. The interval 317–360 is disordered; that stretch reads KRKIHSHKKNSEIHAPVKKDKFKRRSSLLNAKASEKEKSECVVM. 2 stretches are compositionally biased toward basic and acidic residues: residues 325–335 and 349–360; these read KNSEIHAPVKK and ASEKEKSECVVM.

Belongs to the MINDY deubiquitinase family. FAM63 subfamily.

The protein localises to the cytoplasm. It carries out the reaction Thiol-dependent hydrolysis of ester, thioester, amide, peptide and isopeptide bonds formed by the C-terminal Gly of ubiquitin (a 76-residue protein attached to proteins as an intracellular targeting signal).. In terms of biological role, hydrolase that can specifically remove 'Lys-48'-linked conjugated ubiquitin from proteins. Has endodeubiquitinase activity. The chain is Ubiquitin carboxyl-terminal hydrolase MIY1 from Saccharomyces cerevisiae (strain ATCC 204508 / S288c) (Baker's yeast).